Reading from the N-terminus, the 469-residue chain is Glutamate--tRNA ligase (469 aa).

The 'HIGH' region motif lies at 11-21 (PSPTGFIHLGN). The segment covering 121–131 (PRYDGTWRPEP) has biased composition (basic and acidic residues). The interval 121-141 (PRYDGTWRPEPGKVLPEPPPG) is disordered. Positions 243 to 247 (KMSKR) match the 'KMSKS' region motif. Lys246 contacts ATP.

The protein belongs to the class-I aminoacyl-tRNA synthetase family. Glutamate--tRNA ligase type 1 subfamily. As to quaternary structure, monomer.

It is found in the cytoplasm. It carries out the reaction tRNA(Glu) + L-glutamate + ATP = L-glutamyl-tRNA(Glu) + AMP + diphosphate. Functionally, catalyzes the attachment of glutamate to tRNA(Glu) in a two-step reaction: glutamate is first activated by ATP to form Glu-AMP and then transferred to the acceptor end of tRNA(Glu). The protein is Glutamate--tRNA ligase of Burkholderia multivorans (strain ATCC 17616 / 249).